Reading from the N-terminus, the 417-residue chain is mRNA export factor ICP27 homolog (417 aa).

Over residues 1–28 the composition is skewed to acidic residues; sequence MEDIIEGGISSDDDFDSSDSSSDEEESD. The interval 1–143 is disordered; sequence MEDIIEGGIS…NGPLRNGPPR (143 aa). The interaction with RNA stretch occupies residues 64-120; the sequence is RQRSPITWEHQSPLSRVYRSPSPMRFGKRPRISSNSTSRSCKTSWADRVREAAAQRR. A Nuclear localization signal motif is present at residues 88 to 94; it reads RFGKRPR. A compositionally biased stretch (low complexity) spans 96–107; it reads SSNSTSRSCKTS. Positions 106-120 are interaction with host ALYREF or mouse ALYREF2; sequence TSWADRVREAAAQRR. Residues 108–117 show a composition bias toward basic and acidic residues; sequence WADRVREAAA. A Nuclear localization signal motif is present at residues 118–127; it reads QRRPSRPFRK. The span at 120–130 shows a compositional bias: basic residues; the sequence is RPSRPFRKPYS. The span at 132 to 141 shows a compositional bias: low complexity; that stretch reads PRNGPLRNGP. Positions 295, 385, 389, and 394 each coordinate Zn(2+). Residues 295–394 form a CHC2-type zinc finger; sequence CLMQTTPQDH…HLNKCPSSTC (100 aa).

It belongs to the HHV-1 ICP27 protein family. As to quaternary structure, homodimer. Homodimerization is required for transactivation. Interacts with host ALYREF and with mouse ALYREF2. Associates in a complex with RNA, and host export factors NXF1/TAP and ALYREF or ALYREF2; these interactions allow nuclear export of viral transcripts.

It localises to the host cytoplasm. Its subcellular location is the host nucleus. Functionally, probably acts as a viral splicing factor that regulates viral RNA splicing. Functions as a multifunctional regulator of the expression of viral lytic genes. Early protein that promotes the accumulation and nuclear export of viral intronless RNA transcripts by interacting with mRNAs and cellular export proteins. The chain is mRNA export factor ICP27 homolog (EJRF1) from Saimiriine herpesvirus 2 (strain 11) (SaHV-2).